A 101-amino-acid polypeptide reads, in one-letter code: MTVRILAVCGNGQGSSMIMKMKVDQFLTQSNIDHTVNSCAVGEYKSELSGADIIIASTHMAGEITVTGNKYVVGVRNMLSPADFGPKLLKVIKEHFPQDVK.

A PTS EIIB type-2 domain is found at 3–96 (VRILAVCGNG…KLLKVIKEHF (94 aa)). The Phosphocysteine intermediate role is filled by C9. At C9 the chain carries Phosphocysteine.

It is found in the cytoplasm. The enzyme catalyses N(pros)-phospho-L-histidyl-[protein] + L-ascorbate(out) = L-ascorbate 6-phosphate(in) + L-histidyl-[protein]. The phosphoenolpyruvate-dependent sugar phosphotransferase system (sugar PTS), a major carbohydrate active transport system, catalyzes the phosphorylation of incoming sugar substrates concomitantly with their translocation across the cell membrane. The enzyme II UlaABC PTS system is involved in ascorbate transport. In Shigella dysenteriae serotype 1 (strain Sd197), this protein is Ascorbate-specific PTS system EIIB component (ulaB).